The sequence spans 263 residues: Hydroxyacylglutathione hydrolase (263 aa).

7 residues coordinate Zn(2+): H55, H57, D59, H60, H117, D134, and H172.

Belongs to the metallo-beta-lactamase superfamily. Glyoxalase II family. Monomer. Zn(2+) serves as cofactor.

It carries out the reaction an S-(2-hydroxyacyl)glutathione + H2O = a 2-hydroxy carboxylate + glutathione + H(+). The protein operates within secondary metabolite metabolism; methylglyoxal degradation; (R)-lactate from methylglyoxal: step 2/2. Thiolesterase that catalyzes the hydrolysis of S-D-lactoyl-glutathione to form glutathione and D-lactic acid. This is Hydroxyacylglutathione hydrolase from Shewanella baltica (strain OS223).